Consider the following 273-residue polypeptide: Hydroxyethylthiazole kinase (273 aa).

Met49 provides a ligand contact to substrate. Lys125 and Thr171 together coordinate ATP. Gly198 contributes to the substrate binding site.

It belongs to the Thz kinase family. Mg(2+) serves as cofactor.

It carries out the reaction 5-(2-hydroxyethyl)-4-methylthiazole + ATP = 4-methyl-5-(2-phosphooxyethyl)-thiazole + ADP + H(+). It functions in the pathway cofactor biosynthesis; thiamine diphosphate biosynthesis; 4-methyl-5-(2-phosphoethyl)-thiazole from 5-(2-hydroxyethyl)-4-methylthiazole: step 1/1. In terms of biological role, catalyzes the phosphorylation of the hydroxyl group of 4-methyl-5-beta-hydroxyethylthiazole (THZ). This Natranaerobius thermophilus (strain ATCC BAA-1301 / DSM 18059 / JW/NM-WN-LF) protein is Hydroxyethylthiazole kinase.